We begin with the raw amino-acid sequence, 310 residues long: Protoheme IX farnesyltransferase (310 aa).

9 consecutive transmembrane segments (helical) span residues V26 to V45, I49 to W71, G95 to A115, L118 to W138, I147 to G167, L174 to F194, V220 to G240, L243 to W263, and L289 to G309.

This sequence belongs to the UbiA prenyltransferase family. Protoheme IX farnesyltransferase subfamily. As to quaternary structure, interacts with CtaA.

The protein localises to the cell inner membrane. The enzyme catalyses heme b + (2E,6E)-farnesyl diphosphate + H2O = Fe(II)-heme o + diphosphate. It functions in the pathway porphyrin-containing compound metabolism; heme O biosynthesis; heme O from protoheme: step 1/1. In terms of biological role, converts heme B (protoheme IX) to heme O by substitution of the vinyl group on carbon 2 of heme B porphyrin ring with a hydroxyethyl farnesyl side group. In Cereibacter sphaeroides (strain ATCC 17029 / ATH 2.4.9) (Rhodobacter sphaeroides), this protein is Protoheme IX farnesyltransferase.